The sequence spans 137 residues: Small heat shock protein IbpA (137 aa).

Residues 28 to 137 (SQSNGGYPPY…ANKPRRIEIN (110 aa)) form the sHSP domain.

It belongs to the small heat shock protein (HSP20) family. In terms of assembly, monomer. Forms homomultimers of about 100-150 subunits at optimal growth temperatures. Conformation changes to monomers at high temperatures or high ionic concentrations.

The protein resides in the cytoplasm. Functionally, associates with aggregated proteins, together with IbpB, to stabilize and protect them from irreversible denaturation and extensive proteolysis during heat shock and oxidative stress. Aggregated proteins bound to the IbpAB complex are more efficiently refolded and reactivated by the ATP-dependent chaperone systems ClpB and DnaK/DnaJ/GrpE. Its activity is ATP-independent. The chain is Small heat shock protein IbpA from Klebsiella pneumoniae (strain 342).